A 176-amino-acid polypeptide reads, in one-letter code: Small ribosomal subunit protein uS5 (176 aa).

Residues 11 to 74 (LSEVLVDVNR…QAAKKRMMKV (64 aa)) form the S5 DRBM domain.

It belongs to the universal ribosomal protein uS5 family. Part of the 30S ribosomal subunit. Contacts proteins S4 and S8.

Functionally, with S4 and S12 plays an important role in translational accuracy. Its function is as follows. Located at the back of the 30S subunit body where it stabilizes the conformation of the head with respect to the body. This is Small ribosomal subunit protein uS5 from Rickettsia massiliae (strain Mtu5).